The following is a 333-amino-acid chain: Complement C1q and tumor necrosis factor-related protein 9A (333 aa).

Positions 1 to 19 (MRIWWLLLAIEICTGNINS) are cleaved as a signal peptide. Collagen-like domains follow at residues 24 to 82 (RQGH…DGKV), 95 to 154 (GSPG…PGPM), and 155 to 191 (GPIG…GEKG). The segment at 24 to 188 (RQGHPGIPGN…GIRGWKGDRG (165 aa)) is disordered. The span at 26–40 (GHPGIPGNPGHNGLP) shows a compositional bias: low complexity. 4-hydroxyproline is present on residues proline 31, proline 34, and proline 40. Over residues 42 to 57 (RDGRDGAKGDKGDAGE) the composition is skewed to basic and acidic residues. Residues proline 58, proline 61, and proline 64 each carry the 4-hydroxyproline modification. Residues 69–88 (TSGEKGERGADGKVEAKGIK) are compositionally biased toward basic and acidic residues. 5-hydroxylysine occurs at positions 73 and 127. Lysine 73 and lysine 127 each carry an O-linked (Gal...) hydroxylysine glycan. Residues proline 151, proline 160, and proline 175 each carry the 4-hydroxyproline modification. Residues 197–333 (LVLPKSAFTV…FTGFLLFSSP (137 aa)) enclose the C1q domain.

As to quaternary structure, multimers (predominantly trimers). Interacts with ADIPOQ via the C1q domain to form a heterotrimeric complex. Interacts with CTRP9B. Forms heterotrimers and heterooligomeric complexes with CTRP9B. Expressed predominantly in adipose tissue.

It is found in the secreted. Its function is as follows. Probable adipokine. Activates AMPK, AKT, and p44/42 MAPK signaling pathways. This chain is Complement C1q and tumor necrosis factor-related protein 9A (C1QTNF9), found in Homo sapiens (Human).